The sequence spans 66 residues: Potassium channel toxin alpha-KTx 30.1 (66 aa).

A signal peptide spans M1–A24. Disulfide bonds link C30-C50, C36-C55, and C40-C57.

Belongs to the short scorpion toxin superfamily. Potassium channel inhibitor family. Alpha-KTx 30 subfamily. In terms of tissue distribution, expressed by the venom gland.

Its subcellular location is the secreted. Functionally, inhibits Kv1.3/KCNA3 channel (1 uM of the toxin inhibits currents by 64.1%). This chain is Potassium channel toxin alpha-KTx 30.1, found in Scorpiops margerisonae (Scorpion).